The primary structure comprises 46 residues: Protein PsbN (46 aa).

The helical transmembrane segment at 7-27 (ALSVAIGVLAVLLGMTGFGVY) threads the bilayer.

It belongs to the PsbN family.

It is found in the cellular thylakoid membrane. In terms of biological role, may play a role in photosystem I and II biogenesis. The polypeptide is Protein PsbN (Parasynechococcus marenigrum (strain WH8102)).